The following is a 273-amino-acid chain: Eukaryotic translation initiation factor 3 subunit G-2 (273 aa).

Positions 165–193 (KYVPPFMKDGGGGPGGKNWGRGRERDDSS) are disordered. Residues 173-183 (DGGGGPGGKNW) show a composition bias toward gly residues. The 79-residue stretch at 193-271 (SAVRISNLSE…LILCVEWSKP (79 aa)) folds into the RRM domain.

The protein belongs to the eIF-3 subunit G family. In terms of assembly, component of the eukaryotic translation initiation factor 3 (eIF-3) complex. The eIF-3 complex interacts with pix.

The protein resides in the cytoplasm. RNA-binding component of the eukaryotic translation initiation factor 3 (eIF-3) complex, which is involved in protein synthesis of a specialized repertoire of mRNAs and, together with other initiation factors, stimulates binding of mRNA and methionyl-tRNAi to the 40S ribosome. The eIF-3 complex specifically targets and initiates translation of a subset of mRNAs involved in cell proliferation. This subunit can bind 18S rRNA. This chain is Eukaryotic translation initiation factor 3 subunit G-2, found in Drosophila yakuba (Fruit fly).